Reading from the N-terminus, the 706-residue chain is MSIFNKVTKTFQWGQNTVTMETGEIARQASGAVLLDMDGTVVLATVVAKTEGKAGQDFFPLTVDYLEKTYAAGKIPGSFFKREGRPSEFETLTSRLIDRPIRPLFPEGFFNEVHVVVHTLSLNPEVDADIAALIAVSAALSVSGIPFSGPIGAARVGYINGEYVLNPGQTARKDSVMDLVVAGTEAAVLMVESEAQQLSEEIMLGAVVFGHEQGNIAINAIHELVRDAGKPVWDWKAPAKDEPLIAKVGALAAHKLEAAYQIRNKQARTRACREAYAVVMADLKLDGVAFDSVAVEGMLFDIEAKIVRSQILAGEPRIDGRDTRTVRPIEIRNSVLPRTHGSALFTRGETQALVVTTLGTERDAQRIDALSGDYEDRFMLHYNMPPFATGETGRVGTPKRREIGHGRLAKRALMAVLPSKEEFPYTMRVVSEITESNGSSSMASVCGGCLSLMDAGVPMKAHVAGIAMGLIKEENRFAVLTDILGDEDHLGDMDFKVAGTTNGITALQMDIKIQGITKEIMQVALAQAKEARMHILGKMQEAMAEAKTEVSTFAPRLFTMKINPDKIRDVIGKGGSVIRALTEETGTQINIDEDGTITIASADPAKAEEAKRRIQQITAEVEIGKIYEGPITKILDFGALVNLLPGKDGLLHISQIAHERVEKVTDYLSEGQIVKVKVMETDEKGRIKLSMKVLLDRPGQGGPEHV.

2 residues coordinate Mg(2+): D488 and D494. Positions 555 to 614 constitute a KH domain; that stretch reads PRLFTMKINPDKIRDVIGKGGSVIRALTEETGTQINIDEDGTITIASADPAKAEEAKRRI. Positions 624-692 constitute an S1 motif domain; sequence GKIYEGPITK…EKGRIKLSMK (69 aa).

This sequence belongs to the polyribonucleotide nucleotidyltransferase family. The cofactor is Mg(2+).

It is found in the cytoplasm. The enzyme catalyses RNA(n+1) + phosphate = RNA(n) + a ribonucleoside 5'-diphosphate. Functionally, involved in mRNA degradation. Catalyzes the phosphorolysis of single-stranded polyribonucleotides processively in the 3'- to 5'-direction. The polypeptide is Polyribonucleotide nucleotidyltransferase (Albidiferax ferrireducens (strain ATCC BAA-621 / DSM 15236 / T118) (Rhodoferax ferrireducens)).